A 144-amino-acid polypeptide reads, in one-letter code: Small ribosomal subunit protein uS12 (144 aa).

Residues 1–55 (MPTINQLVRKGREDKVVKSKSPALQKGYNSFKKSQTNQSSPQKRGVCTRVGTMTP) form a disordered region. Over residues 27 to 42 (GYNSFKKSQTNQSSPQ) the composition is skewed to polar residues. Asp-102 is modified (3-methylthioaspartic acid). The segment at 119–144 (GVNNRKQGRSKYGTKRPKPGQAAAKK) is disordered. The span at 124 to 144 (KQGRSKYGTKRPKPGQAAAKK) shows a compositional bias: basic residues.

The protein belongs to the universal ribosomal protein uS12 family. As to quaternary structure, part of the 30S ribosomal subunit. Contacts proteins S8 and S17. May interact with IF1 in the 30S initiation complex.

Its function is as follows. With S4 and S5 plays an important role in translational accuracy. Interacts with and stabilizes bases of the 16S rRNA that are involved in tRNA selection in the A site and with the mRNA backbone. Located at the interface of the 30S and 50S subunits, it traverses the body of the 30S subunit contacting proteins on the other side and probably holding the rRNA structure together. The combined cluster of proteins S8, S12 and S17 appears to hold together the shoulder and platform of the 30S subunit. The sequence is that of Small ribosomal subunit protein uS12 from Brevibacillus brevis (strain 47 / JCM 6285 / NBRC 100599).